Reading from the N-terminus, the 60-residue chain is Large ribosomal subunit protein bL32 (60 aa).

It belongs to the bacterial ribosomal protein bL32 family.

This Persephonella marina (strain DSM 14350 / EX-H1) protein is Large ribosomal subunit protein bL32.